The sequence spans 233 residues: Pre-mRNA-splicing factor syf-2 (233 aa).

Polar residues predominate over residues 1-16; that stretch reads MSDSEQTSSGTASSGS. Disordered regions lie at residues 1–80 and 95–119; these read MSDS…EDKG and VTEK…YEDM. The span at 17–80 shows a compositional bias: basic and acidic residues; that stretch reads KMKDFNQRFR…QDRKEAEDKG (64 aa). Residues 18–77 adopt a coiled-coil conformation; it reads MKDFNQRFRDLHKMRQKARKENHAQVVEEDRRKKLPKNFEAKKERDQWQVKELQDRKEAE.

It belongs to the SYF2 family. In terms of assembly, may be part of a spliceosome complex.

Its subcellular location is the nucleus. In terms of biological role, may be involved in pre-mRNA splicing. This Caenorhabditis briggsae protein is Pre-mRNA-splicing factor syf-2.